A 368-amino-acid chain; its full sequence is MPATPPNRLGLTASGLLALCRAGFEKEVAAELDDFAAGIGLTGFVRTRPGSAFVTFETHEPVAFADLAERCDWRTLIFARQLLPWFARVDDLPERDRATPIATATRNAGQRFAQLMLETPDTDEAKQQSGFCRRFTVPLQHELERIGAFREGAKGLPELHILFPDTSTAWLCAALPGQAALWPMGIPRLRMLREAASRSTLKLAEAIFTLLSETERNASLRAGLRAVDLGAAPGGWTWQLAHRGLRVTAVDNGPMAPSVMATEMVEHVRADGFTWRPQRPVEWMVCDMVEQPTRIAALVADWIATGRCRRTIFNLKLPMKKRLEAVEQCRALITKRLAQAGPFELRFKHLYHDREEITGYLALRAAAV.

Residues Ser199, 232–235 (APGG), Asp251, Asp271, and Asp287 each bind S-adenosyl-L-methionine. Lys316 serves as the catalytic Proton acceptor.

It belongs to the class I-like SAM-binding methyltransferase superfamily. RNA methyltransferase RlmE family. RlmM subfamily. In terms of assembly, monomer.

The protein resides in the cytoplasm. It carries out the reaction cytidine(2498) in 23S rRNA + S-adenosyl-L-methionine = 2'-O-methylcytidine(2498) in 23S rRNA + S-adenosyl-L-homocysteine + H(+). In terms of biological role, catalyzes the 2'-O-methylation at nucleotide C2498 in 23S rRNA. The chain is Ribosomal RNA large subunit methyltransferase M from Aromatoleum aromaticum (strain DSM 19018 / LMG 30748 / EbN1) (Azoarcus sp. (strain EbN1)).